Consider the following 599-residue polypeptide: MDAFRDAILQRAPIETFALKTVQHFIQPQKQTKLAQDENQMLENMLRTLLQELVAAAAQSGEQIMQYGQLIDDDDDDDDIHGQIPHLLDVVLYLCEKEHVEGGMIFQLLEDLTEMSTMKNCKDVFGYIESKQDILGKQELFARGKLVMLRTCNQLLRRLSKANDVVFCGRILMFLAHFFPLSERSAVNIKGVFNTSNETKYEKDPPKGISVDFNFYKTFWSLQEYFCNPASLTSASTKWQKFSSSLAVVLNTFDAQPLSEEEGEANSLEEEAATFNIKYLTSSKLMGLELKDSSFRRHILLQCLIMFDYLRAPGKNDKDLPSETMKEELKSCEDRVKKLLEITPPKGKEFLRAVEHILEREKNWVWWKRDGCPPFEKQPIDKKSPNAGQKKRRQRWRLGNKELSQLWRWADQNPNALTDSQRVRTPDIADYWKPLAEDMDPSAGIEDEYHHKNNRVYCWKGLRFTARQDLEGFSRFTEMGIEGVVPVELLPPEVRSKYQAKPNEKAKRAKKEETKGGSHETEGNQIGVSNSEAEAEGGRGDAETMESDAIADTPTPEEQQRLGGSDTENGQEAGQIEDGETEEAGLMDTDLDHPPMPVS.

2 disordered regions span residues 376–395 (EKQP…RRQR) and 497–599 (KYQA…MPVS). The segment covering 502 to 522 (PNEKAKRAKKEETKGGSHETE) has biased composition (basic and acidic residues). Residues 575–585 (QIEDGETEEAG) are compositionally biased toward acidic residues.

In terms of assembly, component of the THO complex, which is composed of THO1, THO2, THO3, THO5, THO6 and THO7.

Its subcellular location is the nucleus. Functionally, acts as a component of the THO subcomplex of the TREX complex which is thought to couple mRNA transcription, processing and nuclear export. Contributes to the integrity of the endogenous trans-acting small interfering RNA (ta-siRNA) pathway. May process or transport a long RNA molecule so that it can be a template for secondary siRNA production. May participate in the trafficking of siRNA precursors to the ARGONAUTE catalytic center. Required for the generation of functional messenger ribonucleoproteins (mRNPs). Plays an important roles in plant innate immunity. The sequence is that of THO complex subunit 1 (THO1) from Arabidopsis thaliana (Mouse-ear cress).